The sequence spans 4194 residues: Hybrid PKS-NRPS synthetase pydA (4194 aa).

A Ketosynthase family 3 (KS3) domain is found at 14–450 (REPIAVVGSG…GTNAHAIVEN (437 aa)). Active-site for beta-ketoacyl synthase activity residues include Cys187, His326, and His370. A Malonyl-CoA:ACP transacylase (MAT) domain is found at 565–887 (VFTGQGAQWA…QRGKDDVQAF (323 aa)). The N-terminal hotdog fold stretch occupies residues 953–1088 (HPLLGTRTTD…GRVIVITGEA (136 aa)). The 305-residue stretch at 953–1257 (HPLLGTRTTD…VVSFSEPTAE (305 aa)) folds into the PKS/mFAS DH domain. His985 functions as the Proton acceptor; for dehydratase activity in the catalytic mechanism. Residues 1103–1257 (LVDIPEDRFY…VVSFSEPTAE (155 aa)) are C-terminal hotdog fold. Asp1163 (proton donor; for dehydratase activity) is an active-site residue. The tract at residues 1302–1596 (YMRQLASLFP…FSGVDSTTHE (295 aa)) is methyltransferase (cMeT) domain. One can recognise a Ketoreductase (KR) domain in the interval 2141–2314 (TYVFFGLTSD…AGSILHIGAV (174 aa)). The Carrier 1 domain occupies 2421-2505 (TTAEEALEIV…ELVEFAVENM (85 aa)). An O-(pantetheine 4'-phosphoryl)serine modification is found at Ser2465. The segment at 2512–2583 (NMSDSLNAVP…ERDSSTASLE (72 aa)) is disordered. The segment covering 2526–2547 (APVIPASPPSGSVSSAPSSDPP) has biased composition (low complexity). The segment covering 2550–2565 (TAETSQHLSESSSKTS) has biased composition (polar residues). The span at 2566–2577 (QPDEKQSEERDS) shows a compositional bias: basic and acidic residues. The segment at 2591–3023 (EKVLPVSPGQ…QILKDVSLFT (433 aa)) is condensation. The adenylation stretch occupies residues 3056-3467 (ANPPQEIALR…RIEGDTQIKL (412 aa)). In terms of domain architecture, Carrier 2 spans 3580–3660 (TQLTEAESEL…AMAAVIQDLS (81 aa)). Ser3620 carries the O-(pantetheine 4'-phosphoryl)serine modification. Positions 3701–3920 (ITGATGFLGK…VDLISVERAA (220 aa)) constitute a Thioester reductase (TE) domain. Disordered regions lie at residues 4031–4110 (RRDK…DEQI) and 4163–4194 (KGEY…EPDD). The span at 4057–4072 (RGRDVSPRHPALDHPD) shows a compositional bias: basic and acidic residues. A compositionally biased stretch (acidic residues) spans 4174–4183 (EEAEEAEWQC). Residues 4184-4194 (DEGHGDGEPDD) are compositionally biased toward basic and acidic residues.

It in the C-terminal section; belongs to the NRP synthetase family. Pantetheine 4'-phosphate serves as cofactor.

It participates in mycotoxin biosynthesis. Functionally, hybrid PKS-NRPS synthetase; part of the gene cluster that mediates the biosynthesis of pyrrocidines, fungal natural products containing a macrocyclic para-cyclophane connected to a decahydrofluorene ring system that show potent antibiotic activities toward Gram-negative bacteria. Within the pathway, the PKS-NRPS pydA, with the help of the trans-enoyl reductase pydC, synthesize the polyketide-tyrosyl acyl thioester product which can be reductively off-loaded by the terminal reductase (R) domain in pydA. The PKS module of pydA acts in combination with the trans-acting enoyl reductase pydC to produce a methylated polyketide attached to the ACP domain. In parallel, the adenylation (A) domain of the NRPS module activated L-tyrosine, which is then transferred to the ACP domain. The condensation (C) domain subsequently link this group to the polyketide chain, forming an enzyme-bound amide. The alpha/beta hydrolase pydG is then required to catalyze the subsequent Knoevenagel condensation that affords the 3-pyrrolin-2-one ring, whereas the four proteins pydB, pydE, pydX and pydZ then function synergistically to form the cyclophane. PydB and the membrane-bound pydX and pydZ are lipid-binding proteins that can sequester and mold the pdyG product into the inverse S-shape. Binding of the medium chain reductase pydE to the complex would trigger the cascade oxidative cyclization. PydY is involved in the Diels-Alder cycloaddition that forms the decahydrofluorene core. Additional non-enzymatic hydroxylation yields pyrrocidine A2 which can be further reduced into pyrrocidine B by an endogenous reductase. This Acremonium sp protein is Hybrid PKS-NRPS synthetase pydA.